The following is a 283-amino-acid chain: DegV domain-containing protein lin2658 (283 aa).

A DegV domain is found at 5-282 (IAVVTDSTTY…EGALGLTWSI (278 aa)). Hexadecanoate is bound by residues Ser63 and Ser96.

Its function is as follows. May bind long-chain fatty acids, such as palmitate, and may play a role in lipid transport or fatty acid metabolism. The chain is DegV domain-containing protein lin2658 from Listeria innocua serovar 6a (strain ATCC BAA-680 / CLIP 11262).